A 211-amino-acid chain; its full sequence is Phosphoserine phosphatase 1 (211 aa).

His-9 acts as the Tele-phosphohistidine intermediate in catalysis. The active site involves His-150.

It belongs to the histidine phosphatase superfamily. Metal-independent phosphoserine phosphatase family. As to quaternary structure, homodimer. Can also form a heterodimer with PspB.

The enzyme catalyses O-phospho-L-serine + H2O = L-serine + phosphate. It carries out the reaction O-phospho-D-serine + H2O = D-serine + phosphate. It participates in amino-acid biosynthesis; L-serine biosynthesis; L-serine from 3-phospho-D-glycerate: step 3/3. With respect to regulation, activity is not inhibited by EDTA in vitro, nor enhanced by the addition of Mg(2+). Catalyzes the dephosphorylation of L-phosphoserine to serine and inorganic phosphate. Is poorly or not active toward D-phosphoserine, DL-phosphothreonine, 3-phosphoglycerate, para-nitrophenylphosphate, and fructose-6-phosphate. Does not display phosphoglycerate mutase activity. The sequence is that of Phosphoserine phosphatase 1 (pspA) from Hydrogenobacter thermophilus (strain DSM 6534 / IAM 12695 / TK-6).